The sequence spans 304 residues: MREKMTEQETYCGFIAIVGRPNVGKSTLLNKILGQKISITSRKAQTTRHRIVGIHTEGVYQAVYVDTPGLHIEEKRAINRLMNRAASSAIGDVDLIIFVVDGTHWNDDDEMVLNKLRRAKAPVVLAINKVDNIKNKDELLPFITDVSQKLEFKEIIPISAQRGNNIHNLEKIVRTSLRKGVHHFPEDYVTDRSQRFMASEIIREKLMRFTGEELPYSVTVEIEQFKLNDRGIYEINGLILVEREGQKKMVIGAKGQKLKTIGTEARQDMERLFDNKVHLELWVKVKSGWADDERALRSLGYIDE.

The Era-type G domain occupies 11–186 (YCGFIAIVGR…LRKGVHHFPE (176 aa)). The G1 stretch occupies residues 19–26 (GRPNVGKS). Residue 19–26 (GRPNVGKS) participates in GTP binding. A G2 region spans residues 45–49 (QTTRH). The interval 66-69 (DTPG) is G3. GTP-binding positions include 66–70 (DTPGL) and 128–131 (NKVD). The G4 stretch occupies residues 128–131 (NKVD). Residues 158 to 160 (ISA) are G5. One can recognise a KH type-2 domain in the interval 210–287 (TGEELPYSVT…HLELWVKVKS (78 aa)).

Belongs to the TRAFAC class TrmE-Era-EngA-EngB-Septin-like GTPase superfamily. Era GTPase family. Monomer.

The protein resides in the cytoplasm. The protein localises to the cell inner membrane. In terms of biological role, an essential GTPase that binds both GDP and GTP, with rapid nucleotide exchange. Plays a role in 16S rRNA processing and 30S ribosomal subunit biogenesis and possibly also in cell cycle regulation and energy metabolism. The sequence is that of GTPase Era from Histophilus somni (strain 2336) (Haemophilus somnus).